Reading from the N-terminus, the 326-residue chain is Gamma-resorcylate decarboxylase (326 aa).

Residues Glu8, His10, His164, and Asp287 each contribute to the Mn(2+) site. Asp287 is an active-site residue.

This sequence belongs to the metallo-dependent hydrolases superfamily. ACMSD family. As to quaternary structure, homotetramer. The cofactor is Mn(2+).

It carries out the reaction 2,6-dihydroxybenzoate + H(+) = resorcinol + CO2. It catalyses the reaction 2,3-dihydroxybenzoate + H(+) = catechol + CO2. Its pathway is aromatic compound metabolism. Its activity is regulated as follows. Activity is inhibited by 2-nitroresorcinol (2-NR). Functionally, involved in the gamma-resorcylate (2,6-dihydroxybenzoate) catabolism. Catalyzes the reversible decarboxylation of gamma-resorcylate to resorcinol. Also catalyzes the decarboxylation of 2,3-dihydroxybenzoate to catechol, 2,4,6-trihydroxybenzoate to benzene-1,3,5-triol, and 2,6-dihydroxy-4-methylbenzoate to 5-methylbenzene-1,3-diol. The chain is Gamma-resorcylate decarboxylase from Polaromonas sp. (strain JS666 / ATCC BAA-500).